The sequence spans 261 residues: 5'-nucleotidase SurE (261 aa).

Positions 18, 19, 50, and 102 each coordinate a divalent metal cation.

It belongs to the SurE nucleotidase family. It depends on a divalent metal cation as a cofactor.

Its subcellular location is the cytoplasm. The catalysed reaction is a ribonucleoside 5'-phosphate + H2O = a ribonucleoside + phosphate. Functionally, nucleotidase that shows phosphatase activity on nucleoside 5'-monophosphates. The sequence is that of 5'-nucleotidase SurE from Rhodospirillum rubrum (strain ATCC 11170 / ATH 1.1.1 / DSM 467 / LMG 4362 / NCIMB 8255 / S1).